A 398-amino-acid chain; its full sequence is Potassium channel subfamily K member 4 (398 aa).

The Cytoplasmic segment spans residues 1–3 (MRS). A helical transmembrane segment spans residues 4-24 (TTLLALLALVLLYLVSGALVF). Over 25–88 (QALEQPHEQQ…WTNSSNHSSA (64 aa)) the chain is Extracellular. 2 N-linked (GlcNAc...) asparagine glycosylation sites follow: asparagine 81 and asparagine 84. The helical intramembrane region spans 89–103 (WNLGSAFFFSGTIIT). Residues threonine 104, isoleucine 105, glycine 106, and tyrosine 107 each contribute to the K(+) site. Residues 104–109 (TIGYGN) are selectivity filter 1. The stretch at 104 to 110 (TIGYGNI) is an intramembrane region. Topologically, residues 111–118 (VLHTDAGR) are extracellular. The chain crosses the membrane as a helical span at residues 119–151 (LFCIFYALVGIPLFGMLLAGVGDRLGSSLRRGI). The Cytoplasmic portion of the chain corresponds to 152-173 (GHIEAIFLKWHVPPGLVRSLSA). A helical membrane pass occupies residues 174-195 (VLFLLIGCLLFVLTPTFVFSYM). Topologically, residues 196–200 (ESWSK) are extracellular. Positions 201 to 214 (LEAIYFVIVTLTTV) form an intramembrane region, helical. Residues threonine 213, valine 214, glycine 215, and phenylalanine 216 each contribute to the K(+) site. Positions 213-218 (TVGFGD) are selectivity filter 2. The stretch at 215–220 (GFGDYV) is an intramembrane region. Over 221–234 (PGDGTGQNSPAYQP) the chain is Extracellular. Residues 235 to 261 (LVWFWILFGLAYFASVLTTIGNWLRAV) traverse the membrane as a helical segment. At 262–398 (SRRTRAEMGG…GRLRDKAVPV (137 aa)) the chain is on the cytoplasmic side. Residues 282–292 (TVTARVTQRTG) are compositionally biased toward polar residues. Residues 282–398 (TVTARVTQRT…GRLRDKAVPV (117 aa)) are disordered. Basic residues predominate over residues 370-389 (PRGRRRPNPSKKPSRPRGPG).

Belongs to the two pore domain potassium channel (TC 1.A.1.8) family. Homodimer; disulfide-linked. Forms heterodimers with other 2-pore domain K(+) channel subunits, such as KCNK2 and KCNK10. Post-translationally, N-glycosylated. As to expression, expressed in brain, spinal cord and eye. Not detected in heart, skeletal muscle, liver, lungs, kidney and testis.

The protein localises to the cell membrane. The protein resides in the cell projection. It localises to the axon. It catalyses the reaction K(+)(in) = K(+)(out). The enzyme catalyses Rb(+)(in) = Rb(+)(out). It carries out the reaction Cs(+)(in) = Cs(+)(out). With respect to regulation, activated by arachidonic acid and other polyunsaturated fatty acids. Not affected by volatile general anesthetics such as chloroform, diethyl ether, halothane and isoflurane. Activated at intracellular and extracellular basic pHs. In terms of biological role, k(+) channel that conducts voltage-dependent outward rectifying currents upon membrane depolarization. Voltage sensing is coupled to K(+) electrochemical gradient in an 'ion flux gating' mode where outward but not inward ion flow opens the gate. Converts to voltage-independent 'leak' conductance mode upon stimulation by various stimuli including mechanical membrane stretch, basic pH, temperature and lipids. Homo- and heterodimerizes to form functional channels with distinct regulatory and gating properties. At trigeminal A-beta afferent nerves, the heterodimer of KCNK2/TREK-1 and KCNK4/TRAAK is mostly coexpressed at nodes of Ranvier where it conducts voltage-independent mechanosensitive and thermosensitive currents, allowing rapid action potential repolarization, high speed and high frequence saltatory conduction on myelinated nerves to ensure prompt sensory responses. Permeable to other monovalent cations such as Rb(+) and Cs(+). In Mus musculus (Mouse), this protein is Potassium channel subfamily K member 4.